Here is a 61-residue protein sequence, read N- to C-terminus: Tubulin alpha-4 chain (61 aa).

GTP is bound at residue Gln11. Residues 35 to 61 (QMPGDKTIGGGDAEFDEGEDGDEGDEY) form a disordered region. The residue at position 40 (Lys40) is an N6-acetyllysine. The span at 47–61 (AEFDEGEDGDEGDEY) shows a compositional bias: acidic residues.

Belongs to the tubulin family. In terms of assembly, dimer of alpha and beta chains. A typical microtubule is a hollow water-filled tube with an outer diameter of 25 nm and an inner diameter of 15 nM. Alpha-beta heterodimers associate head-to-tail to form protofilaments running lengthwise along the microtubule wall with the beta-tubulin subunit facing the microtubule plus end conferring a structural polarity. Microtubules usually have 13 protofilaments but different protofilament numbers can be found in some organisms and specialized cells. Mg(2+) serves as cofactor. In terms of processing, undergoes a tyrosination/detyrosination cycle, the cyclic removal and re-addition of a C-terminal tyrosine residue by the enzymes tubulin tyrosine carboxypeptidase (TTCP) and tubulin tyrosine ligase (TTL), respectively. Post-translationally, acetylation of alpha chains at Lys-40 stabilizes microtubules and affects affinity and processivity of microtubule motors. This modification has a role in multiple cellular functions, ranging from cell motility, cell cycle progression or cell differentiation to intracellular trafficking and signaling.

The protein localises to the cytoplasm. It localises to the cytoskeleton. It carries out the reaction GTP + H2O = GDP + phosphate + H(+). Its function is as follows. Tubulin is the major constituent of microtubules, a cylinder consisting of laterally associated linear protofilaments composed of alpha- and beta-tubulin heterodimers. Microtubules grow by the addition of GTP-tubulin dimers to the microtubule end, where a stabilizing cap forms. Below the cap, tubulin dimers are in GDP-bound state, owing to GTPase activity of alpha-tubulin. The chain is Tubulin alpha-4 chain (TUBA4) from Zea mays (Maize).